Consider the following 221-residue polypeptide: Adenylate kinase (221 aa).

10 to 15 (GAGKGT) is a binding site for ATP. The segment at 30 to 59 (STGDMLRAAVKAGTEFGVAAKKIMDAGGLV) is NMP. Residues Thr31, Arg36, 57-59 (GLV), 85-88 (GFPR), and Gln92 contribute to the AMP site. Residues 122–159 (GRRVHPASGRTYHIKYNPPKVEGKDDVTGDALIQRDDD) form an LID region. Residues Arg123 and 132 to 133 (TY) each bind ATP. Positions 156 and 167 each coordinate AMP. ATP is bound at residue Gly207.

Belongs to the adenylate kinase family. As to quaternary structure, monomer.

The protein resides in the cytoplasm. It carries out the reaction AMP + ATP = 2 ADP. It functions in the pathway purine metabolism; AMP biosynthesis via salvage pathway; AMP from ADP: step 1/1. Its function is as follows. Catalyzes the reversible transfer of the terminal phosphate group between ATP and AMP. Plays an important role in cellular energy homeostasis and in adenine nucleotide metabolism. The protein is Adenylate kinase of Polynucleobacter asymbioticus (strain DSM 18221 / CIP 109841 / QLW-P1DMWA-1) (Polynucleobacter necessarius subsp. asymbioticus).